We begin with the raw amino-acid sequence, 130 residues long: Large ribosomal subunit protein eL22 (130 aa).

Positions 1–21 (MPGKTAQKGGRPSGKGKKKKQ) are disordered. A Nuclear localization signal motif is present at residues 17 to 20 (KKKK).

Belongs to the eukaryotic ribosomal protein eL22 family.

This is Large ribosomal subunit protein eL22 (RPL22) from Tripneustes gratilla (Hawaian sea urchin).